A 912-amino-acid chain; its full sequence is Non-lysosomal glucosylceramidase (912 aa).

The disordered stretch occupies residues 886–912; it reads HKKNSSRPAVTQGTAPSQPECGPKRSL. A compositionally biased stretch (polar residues) spans 891 to 902; that stretch reads SRPAVTQGTAPS.

It belongs to the non-lysosomal glucosylceramidase family.

The protein localises to the endoplasmic reticulum membrane. It is found in the golgi apparatus membrane. It catalyses the reaction a beta-D-glucosyl-(1&lt;-&gt;1')-N-acylsphing-4-enine + H2O = an N-acylsphing-4-enine + D-glucose. The catalysed reaction is a beta-D-galactosyl-(1&lt;-&gt;1')-N-acylsphing-4-enine + H2O = an N-acylsphing-4-enine + D-galactose. It carries out the reaction beta-D-glucosyl-(1-&gt;3)-O-lithocholate + H2O = lithocholate + D-glucose. The enzyme catalyses beta-D-glucosyl-(1-&gt;3)-O-chenodeoxycholate + H2O = chenodeoxycholate + D-glucose. It catalyses the reaction a di-trans,poly-cis-dolichyl beta-D-glucosyl phosphate + chenodeoxycholate = beta-D-glucosyl-(1-&gt;3)-O-chenodeoxycholate + a di-trans,poly-cis-dolichyl phosphate + H(+). The catalysed reaction is octyl beta-D-glucose + chenodeoxycholate = beta-D-glucosyl-(1-&gt;3)-O-chenodeoxycholate + octan-1-ol. It carries out the reaction cholesteryl 3-beta-D-glucoside + H2O = cholesterol + D-glucose. The enzyme catalyses a beta-D-glucosyl-(1&lt;-&gt;1')-N-acylsphing-4-enine + cholesterol = cholesteryl 3-beta-D-glucoside + an N-acylsphing-4-enine. It catalyses the reaction beta-D-glucosyl-N-(9Z-octadecenoyl)-sphing-4E-enine + cholesterol = N-(9Z-octadecenoyl)-sphing-4-enine + cholesteryl 3-beta-D-glucoside. The catalysed reaction is a beta-D-galactosyl-(1&lt;-&gt;1')-N-acylsphing-4-enine + cholesterol = cholesteryl 3-beta-D-galactoside + an N-acylsphing-4-enine. It carries out the reaction 1-(beta-D-galactosyl)-N-dodecanoylsphing-4-enine + cholesterol = cholesteryl 3-beta-D-galactoside + N-dodecanoylsphing-4-enine. It functions in the pathway lipid metabolism; sphingolipid metabolism. The protein operates within steroid metabolism; cholesterol metabolism. Its activity is regulated as follows. Enzymatic activity is dependent on membrane association and requires the presence of lipids. In terms of biological role, non-lysosomal glucosylceramidase that catalyzes the hydrolysis of glucosylceramides/GlcCers (such as beta-D-glucosyl-(1&lt;-&gt;1')-N-acylsphing-4-enine) to free glucose and ceramides (such as N-acylsphing-4-enine). GlcCers are membrane glycosphingolipids that have a wide intracellular distribution. They are the main precursors of more complex glycosphingolipids that play a role in cellular growth, differentiation, adhesion, signaling, cytoskeletal dynamics and membrane properties. Involved in the transglucosylation of cholesterol, transfers glucose from GlcCer to cholesterol, thereby modifying its water solubility and biological properties. Under specific conditions, may catalyze the reverse reaction, transferring glucose from cholesteryl-3-beta-D-glucoside to ceramide (such as N-acylsphing-4-enine). May play a role in the metabolism of bile acids. Able to hydrolyze bile acid 3-O-glucosides as well as to produce bile acid-glucose conjugates thanks to a bile acid glucosyl transferase activity. Catalyzes the hydrolysis of galactosylceramides/GalCers (such as beta-D-galactosyl-(1&lt;-&gt;1')-N-acylsphing-4-enine), as well as the galactosyl transfer between GalCers and cholesterol in vitro with lower activity compared with their activity against GlcCers. This Rattus norvegicus (Rat) protein is Non-lysosomal glucosylceramidase.